A 120-amino-acid chain; its full sequence is Chaperonin GroEL (120 aa).

Position 23–27 (aspartate 23–threonine 27) interacts with ATP.

The protein belongs to the chaperonin (HSP60) family. Forms a cylinder of 14 subunits composed of two heptameric rings stacked back-to-back. Interacts with the co-chaperonin GroES.

The protein localises to the cytoplasm. It catalyses the reaction ATP + H2O + a folded polypeptide = ADP + phosphate + an unfolded polypeptide.. Its function is as follows. Together with its co-chaperonin GroES, plays an essential role in assisting protein folding. The GroEL-GroES system forms a nano-cage that allows encapsulation of the non-native substrate proteins and provides a physical environment optimized to promote and accelerate protein folding. The polypeptide is Chaperonin GroEL (Mycolicibacter nonchromogenicus (Mycobacterium nonchromogenicum)).